Consider the following 506-residue polypeptide: Maturase K (506 aa).

The protein belongs to the intron maturase 2 family. MatK subfamily.

It localises to the plastid. It is found in the chloroplast. Usually encoded in the trnK tRNA gene intron. Probably assists in splicing its own and other chloroplast group II introns. This is Maturase K from Mimosa pudica (Sensitive plant).